We begin with the raw amino-acid sequence, 115 residues long: Gonadotropin subunit beta-2 (115 aa).

Intrachain disulfides connect C6/C54, C20/C69, C23/C107, C31/C85, C35/C87, and C90/C97. Residue N10 is glycosylated (N-linked (GlcNAc...) asparagine).

This sequence belongs to the glycoprotein hormones subunit beta family. Heterodimer of an alpha and a beta chain.

It localises to the secreted. Its function is as follows. Involved in gametogenesis and steroidogenesis. The chain is Gonadotropin subunit beta-2 (cgbb) from Thunnus obesus (Bigeye tuna).